Consider the following 484-residue polypeptide: T-complex protein 1 subunit delta (484 aa).

This sequence belongs to the TCP-1 chaperonin family. As to quaternary structure, component of the T-complex protein 1 (TCP1) complex.

It is found in the cytoplasm. Functionally, molecular chaperone; assists the folding of proteins upon ATP hydrolysis. The sequence is that of T-complex protein 1 subunit delta (CCT4) from Encephalitozoon cuniculi (strain GB-M1) (Microsporidian parasite).